A 567-amino-acid chain; its full sequence is Dihydrolipoyl dehydrogenase 2, chloroplastic (567 aa).

Residues 1–67 constitute a chloroplast transit peptide; sequence MQSVLSLSFS…HIQSRRIEVS (67 aa). Residues 114 to 122, lysine 131, glycine 197, and 221 to 223 contribute to the FAD site; these read EGDVVGGTC and TGS. Cysteine 122 and cysteine 127 are joined by a disulfide. Residues 258–265, glutamate 281, and glycine 354 contribute to the NAD(+) site; that span reads GSGYIGLE. Residues aspartate 400 and 406-409 each bind FAD; that span reads MLAH. The active-site Proton acceptor is histidine 536.

Belongs to the class-I pyridine nucleotide-disulfide oxidoreductase family. In terms of assembly, homodimer. Part of the plastidial pyruvate dehydrogenase complex (PDC) containing multiple copies of three enzymatic components: pyruvate dehydrogenase (E1), dihydrolipoamide acetyltransferase (E2) and lipoamide dehydrogenase (E3). FAD is required as a cofactor. Expressed mainly in flower buds and immature siliques, and to a lesser extent in flowers.

The protein resides in the plastid. Its subcellular location is the chloroplast stroma. The catalysed reaction is N(6)-[(R)-dihydrolipoyl]-L-lysyl-[protein] + NAD(+) = N(6)-[(R)-lipoyl]-L-lysyl-[protein] + NADH + H(+). Lipoamide dehydrogenase is a component of the plastidial pyruvate dehydrogenase complex (PDC). In Arabidopsis thaliana (Mouse-ear cress), this protein is Dihydrolipoyl dehydrogenase 2, chloroplastic (LPD2).